Here is a 775-residue protein sequence, read N- to C-terminus: Glutamine--tRNA ligase (775 aa).

Alanine 2 is subject to N-acetylalanine. A Phosphoserine modification is found at serine 70. ATP contacts are provided by residues glutamate 271–asparagine 273 and histidine 277–alanine 283. Aspartate 303 is a binding site for L-glutamine. Lysine 309 bears the N6-acetyllysine mark. L-glutamine is bound at residue tyrosine 438. ATP contacts are provided by residues threonine 457, arginine 486 to leucine 487, and valine 494 to lysine 496. A Phosphoserine modification is found at serine 495.

The protein belongs to the class-I aminoacyl-tRNA synthetase family. Monomer. Part of a multisubunit complex that groups tRNA ligases for Arg (RARS1), Asp (DARS1), Gln (QARS1), Ile (IARS1), Leu (LARS1), Lys (KARS1), Met (MARS1) the bifunctional ligase for Glu and Pro (EPRS1) and the auxiliary subunits AIMP1/p43, AIMP2/p38 and EEF1E1/p18. Interacts with RARS1. Part of a complex composed of RARS1, QARS1 and AIMP1. In terms of tissue distribution, detected in dorsal root ganglia (at protein level). Detected in dorsal root ganglia.

Its subcellular location is the cytoplasm. It localises to the cytosol. The catalysed reaction is tRNA(Gln) + L-glutamine + ATP = L-glutaminyl-tRNA(Gln) + AMP + diphosphate. Glutamine--tRNA ligase. Plays a critical role in brain development. The sequence is that of Glutamine--tRNA ligase (Qars1) from Rattus norvegicus (Rat).